The primary structure comprises 455 residues: T-box protein VegT (455 aa).

A DNA-binding region (T-box) is located at residues 57–230; sequence LWAQFHQEGT…HNPFAKGFRE (174 aa). The span at 229 to 241 shows a compositional bias: basic and acidic residues; sequence REQERSHKRDDVL. 2 disordered regions span residues 229 to 276 and 295 to 360; these read REQE…RVKE and ANQG…PDSD. The span at 308 to 326 shows a compositional bias: polar residues; the sequence is GANQEQQVPSSSSNFYNRN.

As to quaternary structure, forms a repression complex on the promoters of the nodal/nr1 and siamois genes with the maternal factors tcf7l1/tcf3 and pouf5.1/oct-25. Interacts (via C-terminus) with tcf7l1/tcf3 (via N-terminus). Also interacts with the other POU-domain transcription factors pou5f1.2/oct-91 and pou5f1.3/oct-60. As to expression, vegetally localized in oocytes and expressed in the presumptive endoderm and mesoderm at early gastrula stage. Expression is down-regulated in the endoderm by the end of gastrulation but maintained in the lateral and ventral mesoderm of the blastopore lip.

Its subcellular location is the nucleus. Its function is as follows. Transcription factor required for both mesoderm and endoderm formation in the embryo; signaling determinants and concentration levels may determine which germ layer is formed. Acts together with beta-catenin to activate genes that are responsible for mesoderm induction including wnt-8, eomes t/bra, siamois, mix1 and sox17. Directly binds to promoter DNA. Patterns the mesoderm along the dorsoventral and posterior axis. Activates siamois gene transcription when alone or in combination with beta-catenin, but inhibits siamois transcription in combination with pou5f1.1/oct-25. The chain is T-box protein VegT from Xenopus tropicalis (Western clawed frog).